The primary structure comprises 602 residues: Basic-leucine zipper transcription factor B (602 aa).

The span at 1–10 (MNQFYQSTTG) shows a compositional bias: polar residues. Positions 1 to 128 (MNQFYQSTTG…NRVNQNLASR (128 aa)) are disordered. 2 stretches are compositionally biased toward low complexity: residues 11–54 (GQQN…TSTS) and 66–102 (QQQI…YNGD). Residues 58-94 (KNKDNQSKQQQIQQQQIQQQQQQQQQQQQQIQQQSVD) adopt a coiled-coil conformation. One can recognise a bZIP domain in the interval 113–176 (ENKKNRNRVN…GVEIMKPDPA (64 aa)). The basic motif stretch occupies residues 115-135 (KKNRNRVNQNLASRNYRQRKK). A leucine-zipper region spans residues 138–145 (IKEIEEKL). 2 disordered regions span residues 328 to 401 (TNLS…QNNN) and 525 to 602 (QNQT…PSRQ). 3 stretches are compositionally biased toward low complexity: residues 336 to 350 (PNPT…TQST), 358 to 401 (LTLL…QNNN), and 525 to 592 (QNQT…SSPY). Residues 509–552 (TFSQQTQQLQQAQLQLQNQTKQQQQQLQNNNNNNNNNNNNNNSF) adopt a coiled-coil conformation. A compositionally biased stretch (polar residues) spans 593 to 602 (NHHQQQPSRQ).

This sequence belongs to the bZIP family. As to quaternary structure, binds DNA as a dimer. Heterodimerizes with dimA; in vitro. Also able to form homodimer; in vitro.

The protein localises to the nucleus. Its function is as follows. Transcriptional regulator involved in DIF-1 signaling. DIF-1 (Differentiation Inducing Factor-1) is a signal molecule involved in the differentiation of pstO (prestalk-O) cells. May be a direct activator of ecmA. The chain is Basic-leucine zipper transcription factor B (dimB) from Dictyostelium discoideum (Social amoeba).